We begin with the raw amino-acid sequence, 66 residues long: Putative inactive (E)-beta-ocimene synthase, chloroplastic (66 aa).

Residues 1 to 25 (MAAHNLCFNSAFVCNVHHQKTQHFP) constitute a chloroplast transit peptide.

Belongs to the terpene synthase family. Tpsb subfamily. As to expression, expressed exclusively in flowers.

The protein localises to the plastid. Its subcellular location is the chloroplast. This chain is Putative inactive (E)-beta-ocimene synthase, chloroplastic (TPS02), found in Arabidopsis thaliana (Mouse-ear cress).